Consider the following 530-residue polypeptide: Transcriptional regulator VasH (530 aa).

One can recognise a Sigma-54 factor interaction domain in the interval Leu193–Ala422. Residues Gly221 to Glu228 and Ala284 to Glu293 contribute to the ATP site.

Functionally, transcriptional regulator of the type VI secretion system. This chain is Transcriptional regulator VasH, found in Vibrio cholerae serotype O1 (strain ATCC 39315 / El Tor Inaba N16961).